The sequence spans 332 residues: L-lactate dehydrogenase A chain (332 aa).

NAD(+) is bound by residues 29 to 57 (GAVGMACAISILMKDLADELALVDVIEDK) and R99. The substrate site is built by R106, N138, and R169. N138 contacts NAD(+). Residue H193 is the Proton acceptor of the active site. Position 248 (T248) interacts with substrate.

This sequence belongs to the LDH/MDH superfamily. LDH family. As to quaternary structure, homotetramer.

It localises to the cytoplasm. It catalyses the reaction (S)-lactate + NAD(+) = pyruvate + NADH + H(+). The protein operates within fermentation; pyruvate fermentation to lactate; (S)-lactate from pyruvate: step 1/1. Its function is as follows. Interconverts simultaneously and stereospecifically pyruvate and lactate with concomitant interconversion of NADH and NAD(+). This is L-lactate dehydrogenase A chain (LDHA) from Trachemys scripta elegans (Red-eared slider turtle).